Reading from the N-terminus, the 225-residue chain is Thymidylate kinase (225 aa).

12–19 is a binding site for ATP; that stretch reads GGEGAGKS.

It belongs to the thymidylate kinase family.

It carries out the reaction dTMP + ATP = dTDP + ADP. Its function is as follows. Phosphorylation of dTMP to form dTDP in both de novo and salvage pathways of dTTP synthesis. In Chelativorans sp. (strain BNC1), this protein is Thymidylate kinase.